Reading from the N-terminus, the 169-residue chain is NADH-quinone oxidoreductase subunit B (169 aa).

The [4Fe-4S] cluster site is built by C45, C46, C111, and C141.

The protein belongs to the complex I 20 kDa subunit family. In terms of assembly, NDH-1 is composed of 14 different subunits. Subunits NuoB, C, D, E, F, and G constitute the peripheral sector of the complex. [4Fe-4S] cluster serves as cofactor.

The protein resides in the cell membrane. It catalyses the reaction a quinone + NADH + 5 H(+)(in) = a quinol + NAD(+) + 4 H(+)(out). Its function is as follows. NDH-1 shuttles electrons from NADH, via FMN and iron-sulfur (Fe-S) centers, to quinones in the respiratory chain. The immediate electron acceptor for the enzyme in this species is believed to be a menaquinone. Couples the redox reaction to proton translocation (for every two electrons transferred, four hydrogen ions are translocated across the cytoplasmic membrane), and thus conserves the redox energy in a proton gradient. This chain is NADH-quinone oxidoreductase subunit B, found in Clostridium beijerinckii (strain ATCC 51743 / NCIMB 8052) (Clostridium acetobutylicum).